We begin with the raw amino-acid sequence, 122 residues long: Large ribosomal subunit protein uL14 (122 aa).

Belongs to the universal ribosomal protein uL14 family. Part of the 50S ribosomal subunit. Forms a cluster with proteins L3 and L19. In the 70S ribosome, L14 and L19 interact and together make contacts with the 16S rRNA in bridges B5 and B8.

Functionally, binds to 23S rRNA. Forms part of two intersubunit bridges in the 70S ribosome. This Brevibacillus brevis (strain 47 / JCM 6285 / NBRC 100599) protein is Large ribosomal subunit protein uL14.